A 282-amino-acid polypeptide reads, in one-letter code: Pantothenate synthetase (282 aa).

28 to 35 is an ATP binding site; that stretch reads MGALHSGH. Residue histidine 35 is the Proton donor of the active site. Glutamine 59 is a binding site for (R)-pantoate. Glutamine 59 contributes to the beta-alanine binding site. Position 146–149 (146–149) interacts with ATP; it reads GEKD. Glutamine 152 serves as a coordination point for (R)-pantoate. Residues valine 175 and 183-186 each bind ATP; that span reads LSSR.

It belongs to the pantothenate synthetase family. As to quaternary structure, homodimer.

It localises to the cytoplasm. It catalyses the reaction (R)-pantoate + beta-alanine + ATP = (R)-pantothenate + AMP + diphosphate + H(+). It functions in the pathway cofactor biosynthesis; (R)-pantothenate biosynthesis; (R)-pantothenate from (R)-pantoate and beta-alanine: step 1/1. Functionally, catalyzes the condensation of pantoate with beta-alanine in an ATP-dependent reaction via a pantoyl-adenylate intermediate. This Salinispora arenicola (strain CNS-205) protein is Pantothenate synthetase.